Here is a 253-residue protein sequence, read N- to C-terminus: HTH-type transcriptional regulator YdeO (253 aa).

Residues 137–233 (GKVRNIVNMK…GNSPKRVSKE (97 aa)) form the HTH araC/xylS-type domain. 2 DNA-binding regions (H-T-H motif) span residues 154–175 (KDIC…KQEQ) and 200–223 (VNKI…RKHF).

Functionally, induces the expression of gadE and mdtEF. Could also regulate the expression of other genes involved in acid resistance. The polypeptide is HTH-type transcriptional regulator YdeO (ydeO) (Escherichia coli (strain K12)).